A 314-amino-acid polypeptide reads, in one-letter code: Protein OPG185 (314 aa).

The first 16 residues, 1–16 (MTRLPILLLLISLVYA), serve as a signal peptide directing secretion. Residues 17 to 121 (TPFPQTSKKI…NDTDKVDYEE (105 aa)) form the Ig-like V-type domain. The Virion surface portion of the chain corresponds to 17 to 278 (TPFPQTSKKI…SNYKTKDFVE (262 aa)). Residues C34 and C103 are joined by a disulfide bond. Residues N37, N69, N112, and N161 are each glycosylated (N-linked (GlcNAc...) asparagine; by host). Over residues 193-202 (NTVSASSGES) the composition is skewed to polar residues. The segment at 193–214 (NTVSASSGESTTDETPEPITDK) is disordered. N-linked (GlcNAc...) asparagine; by host glycosylation is present at N253. Residues 279–302 (IFGITALIILSAVAIFCITYYIYN) traverse the membrane as a helical segment. At 303 to 314 (KRSRKYKTENKV) the chain is on the intravirion side.

It belongs to the orthopoxvirus OPG185 family. Heterodimerizes with OPG040. The heterodimer OPG185-OPG040 interacts with components of the entry fusion complex OPG143 and OPG094. Heterodimer with C3/VPC protein; disulfide-linked. In terms of processing, glycosylated; contains phosphate and sulfate-substituted glycans. O-glycosylation is required for hemagglutination and hemadsorption activities of infected cell membranes.

The protein resides in the virion membrane. It is found in the host membrane. Its function is as follows. Prevents cell to cell fusion by interacting with and directing the viral OPG040 protein on the host plasma membrane. The OPG185-OPG040 complex associates with components of the entry fusion complex (EFC) presumably to avoid superinfection and syncytium formation. Via its interaction with C3/VCP protein, protects the infected cell and probably also the extracellular enveloped virus from complement attack. The sequence is that of Protein OPG185 (OPG185) from Bos taurus (Bovine).